A 274-amino-acid chain; its full sequence is Rhamnulose-1-phosphate aldolase (274 aa).

Residue Glu-117 is part of the active site. Positions 141, 143, and 212 each coordinate Zn(2+).

The protein belongs to the aldolase class II family. RhaD subfamily. In terms of assembly, homotetramer. Zn(2+) is required as a cofactor.

The protein resides in the cytoplasm. It carries out the reaction L-rhamnulose 1-phosphate = (S)-lactaldehyde + dihydroxyacetone phosphate. The protein operates within carbohydrate degradation; L-rhamnose degradation; glycerone phosphate from L-rhamnose: step 3/3. In terms of biological role, catalyzes the reversible cleavage of L-rhamnulose-1-phosphate to dihydroxyacetone phosphate (DHAP) and L-lactaldehyde. The polypeptide is Rhamnulose-1-phosphate aldolase (Escherichia coli O157:H7).